The sequence spans 651 residues: Meiotic expression up-regulated protein 6 (651 aa).

Basic and acidic residues-rich tracts occupy residues 1-12 (MSYEGREERPEQ) and 21-30 (VSEHNEHDSG). The disordered stretch occupies residues 1–102 (MSYEGREERP…EKKSKKKAKD (102 aa)). Over residues 72–83 (TVDNIDPADDDP) the composition is skewed to acidic residues. Positions 90–102 (KVEEKKSKKKAKD) are enriched in basic and acidic residues. Residues 194–261 (CRGLLFYSKS…WITDLKNAIA (68 aa)) enclose the PH domain. Disordered stretches follow at residues 365-430 (TVEA…GTPI), 468-514 (VATP…KGGN), and 587-630 (TIKP…QMPQ). Composition is skewed to polar residues over residues 410-429 (ESTS…NGTP) and 478-490 (PSTA…SVVS). Positions 497-514 (KKAGKKHHRHHKKKKGGN) are enriched in basic residues. Over residues 587–604 (TIKPETPLTPTTTPTPRT) the composition is skewed to low complexity.

The sequence is that of Meiotic expression up-regulated protein 6 (meu6) from Schizosaccharomyces pombe (strain 972 / ATCC 24843) (Fission yeast).